The sequence spans 364 residues: uncharacterized protein (364 aa).

Helical transmembrane passes span 41–61, 298–318, and 329–349; these read NIFT…FFGL, VIYI…ITYM, and LLFY…SIII.

The protein resides in the membrane. This is an uncharacterized protein from Mycoplasma capricolum subsp. capricolum (strain California kid / ATCC 27343 / NCTC 10154).